We begin with the raw amino-acid sequence, 401 residues long: L-rhamnonate dehydratase (401 aa).

Positions 29 and 55 each coordinate substrate. Mg(2+)-binding residues include Asp222, Glu248, and Glu276. Catalysis depends on His325, which acts as the Proton acceptor. Substrate is bound at residue Glu345.

It belongs to the mandelate racemase/muconate lactonizing enzyme family. RhamD subfamily. Homooctamer; tetramer of dimers. The cofactor is Mg(2+).

The enzyme catalyses L-rhamnonate = 2-dehydro-3-deoxy-L-rhamnonate + H2O. Its function is as follows. Catalyzes the dehydration of L-rhamnonate to 2-keto-3-deoxy-L-rhamnonate (KDR). The sequence is that of L-rhamnonate dehydratase from Escherichia coli O157:H7.